The primary structure comprises 332 residues: Adenosine deaminase (332 aa).

Positions 12 and 14 each coordinate Zn(2+). Substrate-binding residues include His14, Asp16, and Gly170. Position 197 (His197) interacts with Zn(2+). Glu200 serves as the catalytic Proton donor. Asp278 contributes to the Zn(2+) binding site.

The protein belongs to the metallo-dependent hydrolases superfamily. Adenosine and AMP deaminases family. Adenosine deaminase subfamily. It depends on Zn(2+) as a cofactor.

It carries out the reaction adenosine + H2O + H(+) = inosine + NH4(+). It catalyses the reaction 2'-deoxyadenosine + H2O + H(+) = 2'-deoxyinosine + NH4(+). In terms of biological role, catalyzes the hydrolytic deamination of adenosine and 2-deoxyadenosine. The sequence is that of Adenosine deaminase from Clostridium perfringens (strain ATCC 13124 / DSM 756 / JCM 1290 / NCIMB 6125 / NCTC 8237 / Type A).